A 338-amino-acid chain; its full sequence is MSDIITLAIESSCDETAASVLKNGREVLSNIISTQIETHKKFGGVVPEVASRKHVENIDIVVQEALDKANIGFNDIDHIAVTYGPGLVGALLVGLSYAKALAYTLNIPLVGVNHIEGHLSANYIEHKDLKPPFITLIVSGGHTHLVEVKDYGKYEILGKTRDDASGEAFDKISRAMNLGYPGGPIIDNLAKNGNKHAIEFPRAYLEEDSYDFSFSGLKSSVLNYLNGKRMKNEEIVVEDVAASFQEAVVEVLSTKALKAVKDKGYNIITLSGGVASNSGLRAKITELAKDNGITVKYPPLILCTDNAAMIGCAGYYNFINGKTHDMSLNAVPNLKINQ.

His-114 and His-118 together coordinate Fe cation. Residues 137–141 (IVSGG), Asp-170, Gly-183, Asp-187, and Asn-277 contribute to the substrate site. Asp-305 is a binding site for Fe cation.

The protein belongs to the KAE1 / TsaD family. The cofactor is Fe(2+).

The protein localises to the cytoplasm. It carries out the reaction L-threonylcarbamoyladenylate + adenosine(37) in tRNA = N(6)-L-threonylcarbamoyladenosine(37) in tRNA + AMP + H(+). Its function is as follows. Required for the formation of a threonylcarbamoyl group on adenosine at position 37 (t(6)A37) in tRNAs that read codons beginning with adenine. Is involved in the transfer of the threonylcarbamoyl moiety of threonylcarbamoyl-AMP (TC-AMP) to the N6 group of A37, together with TsaE and TsaB. TsaD likely plays a direct catalytic role in this reaction. This Clostridioides difficile (strain 630) (Peptoclostridium difficile) protein is tRNA N6-adenosine threonylcarbamoyltransferase.